Here is a 103-residue protein sequence, read N- to C-terminus: uncharacterized protein (103 aa).

The next 2 helical transmembrane spans lie at 42 to 62 and 65 to 85; these read PFPLLRLLSVTLFISSLVLLA and TGTLNIFSYSYVVMVVLFICA.

It is found in the membrane. This is an uncharacterized protein from Saccharomyces cerevisiae (strain ATCC 204508 / S288c) (Baker's yeast).